We begin with the raw amino-acid sequence, 157 residues long: uncharacterized protein (157 aa).

Disordered stretches follow at residues 76–105 (AINQELHLTPHKKTSPATSSSLKPRPGPRG) and 132–157 (VRAPSTKPSKTSSSNNPWPLTPRMRG). Residues 135–148 (PSTKPSKTSSSNNP) are compositionally biased toward low complexity.

The protein to M.pneumoniae MPN_091 and MPN_413.

This is an uncharacterized protein from Mycoplasma pneumoniae (strain ATCC 29342 / M129 / Subtype 1) (Mycoplasmoides pneumoniae).